The primary structure comprises 225 residues: Uridylate kinase (225 aa).

An ATP-binding site is contributed by 9 to 10 (GS). Gly-46 is a UMP binding site. Residues Gly-47 and Arg-51 each contribute to the ATP site. UMP is bound by residues Asp-67 and 115–121 (THPAHTT). Thr-141, Asn-142, Tyr-147, and Asp-150 together coordinate ATP.

It belongs to the UMP kinase family. In terms of assembly, homohexamer.

The protein resides in the cytoplasm. It catalyses the reaction UMP + ATP = UDP + ADP. Its pathway is pyrimidine metabolism; CTP biosynthesis via de novo pathway; UDP from UMP (UMPK route): step 1/1. Inhibited by UTP. Functionally, catalyzes the reversible phosphorylation of UMP to UDP. This is Uridylate kinase from Methanococcus maripaludis (strain C6 / ATCC BAA-1332).